Reading from the N-terminus, the 85-residue chain is U4-theraphotoxin-Hhn1m (85 aa).

The first 22 residues, 1-22 (MKVTLIAILTCAAVLVLHTTAA), serve as a signal peptide directing secretion. Residues 23–48 (EELEAESQLVEVGMPDTELAAVDEER) constitute a propeptide that is removed on maturation. Intrachain disulfides connect Cys52-Cys66, Cys56-Cys77, and Cys71-Cys82.

The protein belongs to the neurotoxin 12 (Hwtx-2) family. 02 (Hwtx-2) subfamily. Expressed by the venom gland.

The protein localises to the secreted. In terms of biological role, postsynaptic neurotoxin. In Cyriopagopus hainanus (Chinese bird spider), this protein is U4-theraphotoxin-Hhn1m.